The sequence spans 237 residues: E3 ubiquitin-protein ligase RNF166 (237 aa).

The RING-type zinc-finger motif lies at 33–73; it reads CPICLEVYHRPVAIGSCGHTFCGECLQPCLQVPSPLCPLCR. Residues cysteine 98, cysteine 101, histidine 113, and cysteine 117 each contribute to the Zn(2+) site. A C2HC RNF-type zinc finger spans residues 98 to 117; the sequence is CRGCNKKVTLAKMRAHISSC. One can recognise a UIM domain in the interval 221–237; that stretch reads DEEAAFQAALALSLSEN.

Its subcellular location is the cytoplasm. The enzyme catalyses S-ubiquitinyl-[E2 ubiquitin-conjugating enzyme]-L-cysteine + [acceptor protein]-L-lysine = [E2 ubiquitin-conjugating enzyme]-L-cysteine + N(6)-ubiquitinyl-[acceptor protein]-L-lysine.. Its pathway is protein modification; protein ubiquitination. Its function is as follows. E3 ubiquitin-protein ligase that promotes the ubiquitination of different substrates. In turn, participates in different biological processes including interferon production or autophagy. Plays a role in the activation of RNA virus-induced interferon-beta production by promoting the ubiquitination of TRAF3 and TRAF6. Also plays a role in the early recruitment of autophagy adapters to bacteria. Mediates 'Lys-29' and 'Lys-33'-linked ubiquitination of SQSTM1 leading to xenophagic targeting of bacteria and inhibition of their replication. This is E3 ubiquitin-protein ligase RNF166 (Rnf166) from Mus musculus (Mouse).